Here is a 603-residue protein sequence, read N- to C-terminus: Geraniol synthase, chloroplastic (603 aa).

The N-terminal 35 residues, 1 to 35 (MSSISQKVVIGLNKAAANNNLQNLDRRGFKTRCVS), are a transit peptide targeting the chloroplast. (2E)-geranyl diphosphate-binding residues include arginine 319, aspartate 356, aspartate 360, arginine 497, and aspartate 500. Mg(2+) contacts are provided by aspartate 356 and aspartate 360. The DDXXD motif signature appears at 356-360 (DDVYD). 3 residues coordinate Mg(2+): aspartate 500, threonine 504, and glutamate 508.

The protein belongs to the terpene synthase family. Tpsb subfamily. As to quaternary structure, monomer. Requires Mg(2+) as cofactor. Mn(2+) serves as cofactor.

The protein localises to the plastid. Its subcellular location is the chloroplast. The catalysed reaction is (2E)-geranyl diphosphate + H2O = (2E)-geraniol + diphosphate. It participates in secondary metabolite biosynthesis; terpenoid biosynthesis. Its function is as follows. Monoterpene synthase (mono-TPS) involved in the biosynthesis of monoterpenes natural products. Catalyzes the conversion of (2E)-geranyl diphosphate (GPP) into geraniol. This chain is Geraniol synthase, chloroplastic, found in Perilla frutescens var. hirtella (Perilla citriodora).